Reading from the N-terminus, the 201-residue chain is MAISLTLESTAYTLDQLTAHPEAQIALAGRSNVGKSSLVNALAGRKKLAKVSSTPGKTRSVNFYLVEPLRFYLVDLPGYGYARASHSEREKWAKLLERYLTECASLKALALLLDCRLPPQQLDLNLASFAQAHGLPLVPILTKADKCNQRERAAKQKEWQNIVGVSPVLTSSSSRLGIDRLWQELARAAGVTIIPSAENAQ.

The EngB-type G domain maps to 21-191 (PEAQIALAGR…WQELARAAGV (171 aa)). GTP-binding positions include 29-36 (GRSNVGKS), 56-60 (GKTRS), 75-78 (DLPG), 142-145 (TKAD), and 168-172 (VLTSS). Ser36 and Thr58 together coordinate Mg(2+).

This sequence belongs to the TRAFAC class TrmE-Era-EngA-EngB-Septin-like GTPase superfamily. EngB GTPase family. Requires Mg(2+) as cofactor.

Functionally, necessary for normal cell division and for the maintenance of normal septation. This is Probable GTP-binding protein EngB from Desulfovibrio desulfuricans (strain ATCC 27774 / DSM 6949 / MB).